Reading from the N-terminus, the 254-residue chain is MKDQPIGMFDSGVGGLSTLRDLRALLPHEDIIYYADTGNCPYGGRSHEEIVALSERITYILLERGVKLIVVACNTATLHAVDYLREHFSISFVGMEPGIKPAIAQTKTGVVGVMATQATVAGERFQRLIARYAGDVQVVPQACPGLVELIEAGELQSETTRDAVARYVAPLLKAGADTIVLGCTHYPFLRSLIADVAGPNVALLDTGAAVARQTQRLLAAADLLNPQTSQGSIEWLTSGDPAHFAKIRQCLEIE.

Substrate contacts are provided by residues 10–11 (DS) and 42–43 (YG). Catalysis depends on Cys73, which acts as the Proton donor/acceptor. A substrate-binding site is contributed by 74 to 75 (NT). Cys183 serves as the catalytic Proton donor/acceptor. 184–185 (TH) lines the substrate pocket.

The protein belongs to the aspartate/glutamate racemases family.

It catalyses the reaction L-glutamate = D-glutamate. It participates in cell wall biogenesis; peptidoglycan biosynthesis. Provides the (R)-glutamate required for cell wall biosynthesis. The chain is Glutamate racemase from Herpetosiphon aurantiacus (strain ATCC 23779 / DSM 785 / 114-95).